The sequence spans 131 residues: Leptin receptor overlapping transcript-like 1 (131 aa).

Transmembrane regions (helical) follow at residues 7 to 27 (LISL…GCAL), 32 to 52 (KYWP…YCIA), 69 to 89 (LAIF…IVFA), and 100 to 120 (ALVL…FLVF).

Belongs to the OB-RGRP/VPS55 family. As to quaternary structure, interacts with RAB13. As to expression, widely expressed, with highest expression in heart, testis, adrenal gland, thymus, and spleen, and lowest expression in lung and skeletal muscle.

It localises to the membrane. Functionally, negatively regulates growth hormone (GH) receptor cell surface expression in liver. May play a role in liver resistance to GH during periods of reduced nutrient availability. This Homo sapiens (Human) protein is Leptin receptor overlapping transcript-like 1 (LEPROTL1).